A 719-amino-acid polypeptide reads, in one-letter code: Photosystem I P700 chlorophyll a apoprotein A1 (719 aa).

The next 8 helical transmembrane spans lie at 60–83 (IFSAHFGQLSIIFIWLSGMYFHGA), 146–169 (LYCTAIGALIFAGLMLFAGWFHYH), 185–209 (LNHHLAGLLGLGSLGWAGHQVHVSL), 281–299 (TAHHHIAIAVLFLIAGHMY), 336–359 (WHAQLAVNLAMLGSLTIIVAHHMY), 375–401 (LSLFTHHMWIGGFLVVGAAAHAAIFMV), 423–445 (AIISHLNWVCIFLGFHSFGLYIH), and 521–539 (FLVHHIHAFTIHVTVLILL). Residues cysteine 563 and cysteine 572 each coordinate [4Fe-4S] cluster. A run of 2 helical transmembrane segments spans residues 579 to 600 (HVFLGLFWMYNSISVVIFHFSW) and 654 to 676 (LSAYGLLFLGAHFVWAFSLMFLF). Residue histidine 665 participates in chlorophyll a' binding. The chlorophyll a site is built by methionine 673 and tyrosine 681. Tryptophan 682 is a phylloquinone binding site. A helical transmembrane segment spans residues 714-719 (AVGVAH).

Belongs to the PsaA/PsaB family. In terms of assembly, the PsaA/B heterodimer binds the P700 chlorophyll special pair and subsequent electron acceptors. PSI consists of a core antenna complex that captures photons, and an electron transfer chain that converts photonic excitation into a charge separation. The eukaryotic PSI reaction center is composed of at least 11 subunits. The cofactor is P700 is a chlorophyll a/chlorophyll a' dimer, A0 is one or more chlorophyll a, A1 is one or both phylloquinones and FX is a shared 4Fe-4S iron-sulfur center..

The protein localises to the plastid. It localises to the chloroplast thylakoid membrane. The catalysed reaction is reduced [plastocyanin] + hnu + oxidized [2Fe-2S]-[ferredoxin] = oxidized [plastocyanin] + reduced [2Fe-2S]-[ferredoxin]. In terms of biological role, psaA and PsaB bind P700, the primary electron donor of photosystem I (PSI), as well as the electron acceptors A0, A1 and FX. PSI is a plastocyanin-ferredoxin oxidoreductase, converting photonic excitation into a charge separation, which transfers an electron from the donor P700 chlorophyll pair to the spectroscopically characterized acceptors A0, A1, FX, FA and FB in turn. Oxidized P700 is reduced on the lumenal side of the thylakoid membrane by plastocyanin. The protein is Photosystem I P700 chlorophyll a apoprotein A1 of Equisetum palustre (Marsh horsetail).